Reading from the N-terminus, the 461-residue chain is LL-diaminopimelate aminotransferase, chloroplastic (461 aa).

The transit peptide at 1–45 directs the protein to the chloroplast; that stretch reads MSSTHQLVSSMISSSSSTFLAPSNFNLRTRNACLPMAKRVNTCKC. Positions 72 and 99 each coordinate substrate. Pyridoxal 5'-phosphate is bound by residues Tyr129, 163–164, Tyr187, Asn244, Tyr275, and 302–304; these read AK and SFS. Lys164, Tyr187, and Asn244 together coordinate substrate. N6-(pyridoxal phosphate)lysine is present on Lys305. Arg313 and Asn344 together coordinate pyridoxal 5'-phosphate. The substrate site is built by Asn344 and Arg439.

It belongs to the class-I pyridoxal-phosphate-dependent aminotransferase family. LL-diaminopimelate aminotransferase subfamily. Homodimer. It depends on pyridoxal 5'-phosphate as a cofactor. Highly expressed in seedlings, roots, stems, flowers and leaves. Lower expression in siliques.

The protein localises to the plastid. It is found in the chloroplast. The catalysed reaction is (2S,6S)-2,6-diaminopimelate + 2-oxoglutarate = (S)-2,3,4,5-tetrahydrodipicolinate + L-glutamate + H2O + H(+). The protein operates within amino-acid biosynthesis; L-lysine biosynthesis via DAP pathway; LL-2,6-diaminopimelate from (S)-tetrahydrodipicolinate (aminotransferase route): step 1/1. In terms of biological role, required for lysine biosynthesis. Catalyzes the direct conversion of tetrahydrodipicolinate to LL-diaminopimelate, a reaction that requires three enzymes in E.coli. Not active with meso-diaminopimelate, lysine or ornithine as substrates. This Arabidopsis thaliana (Mouse-ear cress) protein is LL-diaminopimelate aminotransferase, chloroplastic (DAP).